The following is a 294-amino-acid chain: Glycine-rich protein 2 (294 aa).

The first 20 residues, 1-20, serve as a signal peptide directing secretion; it reads MKMWFRLATFVTLIIEFAHC. Residues 205-221 show a composition bias toward low complexity; the sequence is TGSQTGAAANGTSAGAA. A disordered region spans residues 205-225; the sequence is TGSQTGAAANGTSAGAAVRGG.

As to expression, nacreous layer of shell (at protein level). Expressed primarily in the mantle with highest level in the mantle pallium and lower level in the mantle edge.

It is found in the secreted. The sequence is that of Glycine-rich protein 2 from Pinctada maxima (Silver-lipped pearl oyster).